Consider the following 950-residue polypeptide: MORC family CW-type zinc finger protein 1 (950 aa).

Residues 281 to 342 are a coiled coil; it reads KGKFKTEVQK…TKHKSLRQKQ (62 aa). The CW-type zinc finger occupies 465–530; it reads SLESLQWRRR…SCNQIERLPS (66 aa). Zn(2+) is bound by residues Cys-485, Cys-488, Cys-511, and Cys-522. Disordered stretches follow at residues 532–551 and 679–700; these read PLGTVNRRPPSKDERERQLQ and KKQQSESLVQAGKASTDVASSR. The segment covering 541–550 has biased composition (basic and acidic residues); sequence PSKDERERQL. The stretch at 885-916 forms a coiled coil; sequence LGQCELKRKRTEEKLSDLRAKLALLLQKLQLG.

In terms of tissue distribution, expressed at very low level in male germ cells.

The protein localises to the nucleus. Functionally, required for spermatogenesis. Essential for de novo DNA methylation and silencing of transposable elements in the male embryonic germ cells. Not required for piRNA biosynthesis. In Mus musculus (Mouse), this protein is MORC family CW-type zinc finger protein 1.